Consider the following 2170-residue polypeptide: ATP-binding cassette sub-family A member 7 (2170 aa).

Residues 22–42 (PIQLVVELLWPLFLFFILVAV) form a helical membrane-spanning segment. Topologically, residues 43 to 547 (RHSHPPLEHH…DVFLRVLSRS (505 aa)) are extracellular. A disulfide bridge links Cys75 with Cys222. Asn309 is a glycosylation site (N-linked (GlcNAc...) asparagine). 6 helical membrane-spanning segments follow: residues 548–568 (LPLF…KAVV), 591–611 (LGWF…LVLV), 624–644 (VVVF…SFLL), 653–673 (LAAA…VLCV), 679–699 (LPLG…GFGC), and 733–753 (AFLL…EAVC). The 232-residue stretch at 805-1036 (VSIRGLKKHF…LGCGYYLTLV (232 aa)) folds into the ABC transporter 1 domain. 839 to 846 (GHNGAGKT) provides a ligand contact to ATP. A helical transmembrane segment spans residues 847–867 (TTLSILSGLFPPSSGSASILG). Residues 1044–1086 (THDLKGDTEDPRREKKSGSEGKTADTVLTRDGPHRSSQVPAPD) form a disordered region. Over residues 1045–1066 (HDLKGDTEDPRREKKSGSEGKT) the composition is skewed to basic and acidic residues. A helical transmembrane segment spans residues 1257-1277 (IVLPALFVGLALFFTLIVPPF). The Extracellular portion of the chain corresponds to 1278–1562 (GQYPPLQLSP…TLIASSVDVL (285 aa)). An intrachain disulfide couples Cys1370 to Cys1384. Helical transmembrane passes span 1563 to 1583 (VSIC…LVLI), 1609 to 1629 (FLWD…IFLA), 1646 to 1666 (LLLL…SFFF), 1674 to 1694 (VVLT…TFVL), 1708 to 1728 (ILKQ…LIDM), and 1754 to 1774 (IIGK…LITL). Residues 1818–2050 (LVLRDLTKVY…FGAGHTLTLR (233 aa)) form the ABC transporter 2 domain. 1852–1859 (GVNGAGKT) contacts ATP. The tract at residues 2129–2170 (QGEEEEGSGQETETREVSTPGLQHPKRVSRFLEDPSSVETVI) is disordered.

It belongs to the ABC transporter superfamily. ABCA family. N-glycosylated. Expressed in blood cells. Also detected in brain and ovary tissues (at protein level). Expressed in platelet.

The protein localises to the cell membrane. It is found in the golgi apparatus membrane. It localises to the early endosome membrane. Its subcellular location is the cell projection. The protein resides in the ruffle membrane. The protein localises to the phagocytic cup. It is found in the cytoplasm. In terms of biological role, ATP-binding cassette (ABC) transporter that plays a role in lipid homeostasis and macrophage-mediated phagocytosis. Binds APOA1 and may function in apolipoprotein-mediated phospholipid efflux from cells. May also mediate cholesterol efflux. May regulate cellular ceramide homeostasis during keratinocyte differentiation. Involved in lipid raft organization and CD1D localization on thymocytes and antigen-presenting cells, which plays an important role in natural killer T-cell development and activation. Plays a role in phagocytosis of apoptotic cells by macrophages. Macrophage phagocytosis is stimulated by APOA1 or APOA2, probably by stabilization of ABCA7. Also involved in phagocytic clearance of amyloid-beta by microglia cells and macrophages. Further limits amyloid-beta production by playing a role in the regulation of amyloid-beta A4 precursor protein (APP) endocytosis and/or processing. The sequence is that of ATP-binding cassette sub-family A member 7 (Abca7) from Rattus norvegicus (Rat).